The sequence spans 451 residues: MILSVNSAWLERFQADRPREKDHRPPFRRDRARILHSAAFRCLQAKTQIHAVGENDFYRTRLTHSLEVAQIGSSLASQLRFTEAFTSLTEQLNCSSKELESVLKPLLPSNDLIETLCFAHDIGHPPFGHGGETALNAMMRHSGGFEGNAQTFRIVTKLEPYTEKAGMNLTRRTVLGLVKYPAILDEASPQYSLLDLPHPTDLGHLRQIDWRPSKGLYRDDLTMINWLLKPLSDTDRRLFTSFRKVRSNFQEFLKTVYKSLDCSIMELADDIAYGVHDLEDAVVVGLISQSQWQAAYDELKNCSSDWMRKNVDTLTQKLFSDYHYERKNAIGALVNYFITHVRWKMTADFTDPLLRYNAELPDDVICVLNIFKDFVFKYVIRDVETQRIEFRGQRILTDMFQIFESDPERLLPRNTVKRWQNAEAEGRKRIICDYIAGMSDAYALRVHRQLS.

One can recognise an HD domain in the interval 61-274; sequence RLTHSLEVAQ…MELADDIAYG (214 aa).

This sequence belongs to the dGTPase family. Type 2 subfamily.

In Actinobacillus succinogenes (strain ATCC 55618 / DSM 22257 / CCUG 43843 / 130Z), this protein is Deoxyguanosinetriphosphate triphosphohydrolase-like protein.